Consider the following 62-residue polypeptide: UPF0434 protein R03186 (62 aa).

This sequence belongs to the UPF0434 family.

This Rhizobium meliloti (strain 1021) (Ensifer meliloti) protein is UPF0434 protein R03186.